The following is a 216-amino-acid chain: MQAQTLHIRHLGMQDYESTWHAMQEYTDTRDSDSQDELWIVEHPPVFTQGQAGKSEHILNPGDIPVIQVDRGGQVTYHGPGQLVVYPLIDIKRNKLGVRQLVNNIEQSIIDMLAYYAINAYAKADAPGVYVTEQKIASLGLRIRKGCSFHGLALNVDMDLAPFQRINPCGYAGLEMVQCKALGGPQTVLEAGDKLIQTFSQIMGYQQLVHHQGLAE.

The 176-residue stretch at serine 32 to glutamine 207 folds into the BPL/LPL catalytic domain. Substrate contacts are provided by residues arginine 71 to histidine 78, serine 138 to glycine 140, and glycine 151 to alanine 153. The Acyl-thioester intermediate role is filled by cysteine 169.

This sequence belongs to the LipB family.

The protein resides in the cytoplasm. It carries out the reaction octanoyl-[ACP] + L-lysyl-[protein] = N(6)-octanoyl-L-lysyl-[protein] + holo-[ACP] + H(+). It participates in protein modification; protein lipoylation via endogenous pathway; protein N(6)-(lipoyl)lysine from octanoyl-[acyl-carrier-protein]: step 1/2. Functionally, catalyzes the transfer of endogenously produced octanoic acid from octanoyl-acyl-carrier-protein onto the lipoyl domains of lipoate-dependent enzymes. Lipoyl-ACP can also act as a substrate although octanoyl-ACP is likely to be the physiological substrate. This is Octanoyltransferase from Shewanella frigidimarina (strain NCIMB 400).